A 1084-amino-acid chain; its full sequence is CRISPR-associated endonuclease Cas9 (1084 aa).

Asp-8 acts as the For RuvC-like nuclease domain in catalysis. Asp-8, Glu-496, and Glu-500 together coordinate Mn(2+). Residues 504–665 enclose the HNH Cas9-type domain; it reads TEKRAREMDG…MDEEIDARSM (162 aa). His-573 acts as the Proton acceptor for HNH nuclease domain in catalysis. Mn(2+) is bound at residue His-727.

The protein belongs to the CRISPR-associated protein Cas9 family. Subtype II-C subfamily. In terms of assembly, monomer. Binds crRNA and tracrRNA. Mg(2+) serves as cofactor.

Functionally, CRISPR (clustered regularly interspaced short palindromic repeat) is an adaptive immune system that provides protection against mobile genetic elements (viruses, transposable elements and conjugative plasmids). CRISPR clusters contain spacers, sequences complementary to antecedent mobile elements, and target invading nucleic acids. CRISPR clusters are transcribed and processed into CRISPR RNA (crRNA). In type II CRISPR systems correct processing of pre-crRNA requires a trans-encoded small RNA (tracrRNA), endogenous ribonuclease 3 (rnc) and this protein. The tracrRNA serves as a guide for ribonuclease 3-aided processing of pre-crRNA. Subsequently Cas9/crRNA/tracrRNA endonucleolytically cleaves linear or circular dsDNA target complementary to the spacer; Cas9 is inactive in the absence of the 2 guide RNAs (gRNA). Cas9 recognizes the protospacer adjacent motif (PAM) in the CRISPR repeat sequences to help distinguish self versus nonself, as targets within the bacterial CRISPR locus do not have PAMs. PAM recognition is also required for catalytic activity. In Corynebacterium diphtheriae (strain ATCC 700971 / NCTC 13129 / Biotype gravis), this protein is CRISPR-associated endonuclease Cas9.